Consider the following 428-residue polypeptide: Adenylosuccinate synthetase (428 aa).

GTP-binding positions include 12-18 (GDEGKGK) and 40-42 (GHT). Asp13 (proton acceptor) is an active-site residue. Residues Asp13 and Gly40 each coordinate Mg(2+). Residues 13–16 (DEGK), 38–41 (NAGH), Thr130, Arg144, Gln225, Thr240, and Arg304 contribute to the IMP site. Residue His41 is the Proton donor of the active site. Residue 300–306 (VTTGRSR) participates in substrate binding. GTP-binding positions include Arg306, 332–334 (KID), and 414–416 (GVG).

This sequence belongs to the adenylosuccinate synthetase family. Homodimer. Mg(2+) serves as cofactor.

Its subcellular location is the cytoplasm. It carries out the reaction IMP + L-aspartate + GTP = N(6)-(1,2-dicarboxyethyl)-AMP + GDP + phosphate + 2 H(+). The protein operates within purine metabolism; AMP biosynthesis via de novo pathway; AMP from IMP: step 1/2. Functionally, plays an important role in the de novo pathway of purine nucleotide biosynthesis. Catalyzes the first committed step in the biosynthesis of AMP from IMP. The chain is Adenylosuccinate synthetase from Clostridium botulinum (strain Eklund 17B / Type B).